A 643-amino-acid chain; its full sequence is Threonine--tRNA ligase (643 aa).

In terms of domain architecture, TGS spans 1 to 62 (MSFSVTLPDG…DEDVEAAIIT (62 aa)). The segment at 239-537 (DHRTIGRDLD…LTEIYKGAFP (299 aa)) is catalytic. Zn(2+)-binding residues include C333, H384, and H514.

This sequence belongs to the class-II aminoacyl-tRNA synthetase family. In terms of assembly, homodimer. It depends on Zn(2+) as a cofactor.

It localises to the cytoplasm. The catalysed reaction is tRNA(Thr) + L-threonine + ATP = L-threonyl-tRNA(Thr) + AMP + diphosphate + H(+). Catalyzes the attachment of threonine to tRNA(Thr) in a two-step reaction: L-threonine is first activated by ATP to form Thr-AMP and then transferred to the acceptor end of tRNA(Thr). Also edits incorrectly charged L-seryl-tRNA(Thr). This is Threonine--tRNA ligase from Lactobacillus gasseri (strain ATCC 33323 / DSM 20243 / BCRC 14619 / CIP 102991 / JCM 1131 / KCTC 3163 / NCIMB 11718 / NCTC 13722 / AM63).